The following is a 540-amino-acid chain: GMP synthase [glutamine-hydrolyzing] (540 aa).

Positions 29 to 222 (KILIVDFGSQ…VRKVAGLTGD (194 aa)) constitute a Glutamine amidotransferase type-1 domain. The active-site Nucleophile is Cys106. Active-site residues include His196 and Glu198. The GMPS ATP-PPase domain occupies 223 to 415 (WTMRAFREEA…LGLPEIFVGR (193 aa)). 250–256 (SGGVDSA) is an ATP binding site.

Homodimer.

The enzyme catalyses XMP + L-glutamine + ATP + H2O = GMP + L-glutamate + AMP + diphosphate + 2 H(+). Its pathway is purine metabolism; GMP biosynthesis; GMP from XMP (L-Gln route): step 1/1. Its function is as follows. Catalyzes the synthesis of GMP from XMP. This Rhodopseudomonas palustris (strain HaA2) protein is GMP synthase [glutamine-hydrolyzing].